A 504-amino-acid chain; its full sequence is Ribosomal protein uS12 methylthiotransferase RimO (504 aa).

The MTTase N-terminal domain occupies 21–131 (KRVGFISLGC…VMGHVRELLP (111 aa)). Positions 30, 66, 95, 186, 190, and 193 each coordinate [4Fe-4S] cluster. One can recognise a Radical SAM core domain in the interval 172 to 408 (LTPRHYAYVK…MEVAQRISTE (237 aa)). Residues 411–487 (SEKVGRVMDV…EYDLFGEVIE (77 aa)) form the TRAM domain.

The protein belongs to the methylthiotransferase family. RimO subfamily. Requires [4Fe-4S] cluster as cofactor.

It is found in the cytoplasm. It carries out the reaction L-aspartate(89)-[ribosomal protein uS12]-hydrogen + (sulfur carrier)-SH + AH2 + 2 S-adenosyl-L-methionine = 3-methylsulfanyl-L-aspartate(89)-[ribosomal protein uS12]-hydrogen + (sulfur carrier)-H + 5'-deoxyadenosine + L-methionine + A + S-adenosyl-L-homocysteine + 2 H(+). Catalyzes the methylthiolation of an aspartic acid residue of ribosomal protein uS12. This is Ribosomal protein uS12 methylthiotransferase RimO from Deinococcus radiodurans (strain ATCC 13939 / DSM 20539 / JCM 16871 / CCUG 27074 / LMG 4051 / NBRC 15346 / NCIMB 9279 / VKM B-1422 / R1).